The primary structure comprises 226 residues: Peptidyl-prolyl cis-trans isomerase CYP23 (226 aa).

Positions 1–22 are cleaved as a signal peptide; that stretch reads MGITRNLILGLACLAFVSIAKA. The 158-residue stretch at 34-191 folds into the PPIase cyclophilin-type domain; sequence VVFQTSYGDI…ERITILSTYY (158 aa).

The protein belongs to the cyclophilin-type PPIase family. As to expression, ubiquitous. Lower expression in roots.

The protein localises to the endoplasmic reticulum. The catalysed reaction is [protein]-peptidylproline (omega=180) = [protein]-peptidylproline (omega=0). In terms of biological role, PPIases accelerate the folding of proteins. It catalyzes the cis-trans isomerization of proline imidic peptide bonds in oligopeptides. This chain is Peptidyl-prolyl cis-trans isomerase CYP23 (CYP23), found in Arabidopsis thaliana (Mouse-ear cress).